The chain runs to 175 residues: Transcription factor E (175 aa).

The HTH TFE/IIEalpha-type domain occupies Ala4–Asn88.

This sequence belongs to the TFE family. As to quaternary structure, monomer. Interaction with RNA polymerase subunits RpoF and RpoE is necessary for Tfe stimulatory transcription activity. Able to interact with Tbp and RNA polymerase in the absence of DNA promoter. Interacts both with the preinitiation and elongation complexes.

Its function is as follows. Transcription factor that plays a role in the activation of archaeal genes transcribed by RNA polymerase. Facilitates transcription initiation by enhancing TATA-box recognition by TATA-box-binding protein (Tbp), and transcription factor B (Tfb) and RNA polymerase recruitment. Not absolutely required for transcription in vitro, but particularly important in cases where Tbp or Tfb function is not optimal. It dynamically alters the nucleic acid-binding properties of RNA polymerases by stabilizing the initiation complex and destabilizing elongation complexes. Seems to translocate with the RNA polymerase following initiation and acts by binding to the non template strand of the transcription bubble in elongation complexes. This is Transcription factor E from Saccharolobus islandicus (strain Y.N.15.51 / Yellowstone #2) (Sulfolobus islandicus).